Here is a 253-residue protein sequence, read N- to C-terminus: 5-oxoprolinase subunit A (253 aa).

Belongs to the LamB/PxpA family. In terms of assembly, forms a complex composed of PxpA, PxpB and PxpC.

The enzyme catalyses 5-oxo-L-proline + ATP + 2 H2O = L-glutamate + ADP + phosphate + H(+). Functionally, catalyzes the cleavage of 5-oxoproline to form L-glutamate coupled to the hydrolysis of ATP to ADP and inorganic phosphate. The polypeptide is 5-oxoprolinase subunit A (Bacillus cereus (strain ATCC 10987 / NRS 248)).